The chain runs to 101 residues: Urease subunit beta (101 aa).

The protein belongs to the urease beta subunit family. In terms of assembly, heterotrimer of UreA (gamma), UreB (beta) and UreC (alpha) subunits. Three heterotrimers associate to form the active enzyme.

The protein resides in the cytoplasm. The catalysed reaction is urea + 2 H2O + H(+) = hydrogencarbonate + 2 NH4(+). The protein operates within nitrogen metabolism; urea degradation; CO(2) and NH(3) from urea (urease route): step 1/1. This Thermosynechococcus vestitus (strain NIES-2133 / IAM M-273 / BP-1) protein is Urease subunit beta.